Here is a 430-residue protein sequence, read N- to C-terminus: Glutamate-1-semialdehyde 2,1-aminomutase (430 aa).

Lys267 bears the N6-(pyridoxal phosphate)lysine mark.

It belongs to the class-III pyridoxal-phosphate-dependent aminotransferase family. HemL subfamily. In terms of assembly, homodimer. Pyridoxal 5'-phosphate serves as cofactor.

The protein localises to the cytoplasm. It carries out the reaction (S)-4-amino-5-oxopentanoate = 5-aminolevulinate. The protein operates within porphyrin-containing compound metabolism; protoporphyrin-IX biosynthesis; 5-aminolevulinate from L-glutamyl-tRNA(Glu): step 2/2. This Anaeromyxobacter dehalogenans (strain 2CP-1 / ATCC BAA-258) protein is Glutamate-1-semialdehyde 2,1-aminomutase.